Reading from the N-terminus, the 376-residue chain is MELHLALRASPLPAADPGRRPPPPRGNFATNCTAAINSTHISQEKFRSLDSWVEHNMLTFLKPVEKCWQPQDFLPDPSHLSAEELGDAVREIHERAAEIPDEVWVCMVGNMVTEEALPTYQSLISSVLGGTVAGSTPWDRWIRGWSAEENRHGDLLNKYLYLTGRLDMRQVEKTIQYLIGSGMDVGVGNSILCGFIYTCFQEKATFISHGNTARLAKHHGDTTLAKICGLVAADEKRHAVAYTNLMKKLFEVAPNESMLAFAHIMRAHVTMPASRMFDGRDPRLFTHFSAVTQKIGVYTVRDYGEMLDFFLKEWEISAVVDDLSPEGRQAQEYVCGLPEVMGKMAERADDRRKKLVNVGEPRYIPFSWIFNKQVCV.

Residues 1-33 (MELHLALRASPLPAADPGRRPPPPRGNFATNCT) constitute a chloroplast transit peptide. The Fe cation site is built by E114, E149, H152, E202, E235, and H238.

This sequence belongs to the fatty acid desaturase type 2 family. Homodimer. The cofactor is Fe(2+). As to expression, preferentially expressed in the flower labellum.

It is found in the plastid. The protein localises to the chloroplast stroma. It catalyses the reaction hexadecanoyl-[ACP] + 2 reduced [2Fe-2S]-[ferredoxin] + O2 + 2 H(+) = (4Z)-hexadecenoyl-[ACP] + 2 oxidized [2Fe-2S]-[ferredoxin] + 2 H2O. The catalysed reaction is octadecanoyl-[ACP] + 2 reduced [2Fe-2S]-[ferredoxin] + O2 + 2 H(+) = (9Z)-octadecenoyl-[ACP] + 2 oxidized [2Fe-2S]-[ferredoxin] + 2 H2O. It functions in the pathway lipid metabolism; fatty acid metabolism. Converts stearoyl-ACP to oleoyl-ACP by introduction of a cis double bond between carbons 9 and 10 of the acyl chain. Converts palmitoyl-ACP to (4Z)-hexadec-4-enoyl-ACP by introduction of a cis double bond between carbons 4 and 5 of the acyl chain. Catalyzes the desaturation of saturated fatty acid 18:0 and 16:0 to generate 18:1 (delta-9) and 16:1 (delta-4) intermediates, expected to give rise to 9-alkenes and 12-alkenes, respectively. The protein is Palmitoyl-[acyl-carrier-protein] 4-desaturase 2, chloroplastic (SAD2) of Ophrys sphegodes (Early spider orchid).